Here is a 113-residue protein sequence, read N- to C-terminus: Ribonuclease P protein component (113 aa).

Belongs to the RnpA family. As to quaternary structure, consists of a catalytic RNA component (M1 or rnpB) and a protein subunit.

It catalyses the reaction Endonucleolytic cleavage of RNA, removing 5'-extranucleotides from tRNA precursor.. RNaseP catalyzes the removal of the 5'-leader sequence from pre-tRNA to produce the mature 5'-terminus. It can also cleave other RNA substrates such as 4.5S RNA. The protein component plays an auxiliary but essential role in vivo by binding to the 5'-leader sequence and broadening the substrate specificity of the ribozyme. This Vesicomyosocius okutanii subsp. Calyptogena okutanii (strain HA) protein is Ribonuclease P protein component.